We begin with the raw amino-acid sequence, 635 residues long: MVSIRLPDGSVRQYEHPVTVAEVAASIGPGLAKAALGGKLDGELVDTSTVIDRDAALAIITDKDADGLDIIRHSTAHLLAYAVKELYPDAQVTIGPVIDNGFYYDFSYNRPFTPEDLEKIEKRMQEIAKKDEPVTRRVVSRDEAAGYFRSIGEKYKAEIIESIPQTDEIKLYSHGGFTDLCRGPHVPSTGKLKVFKLMKVAGAYWRGDSKNEQLQRIYGTAWTKKEDQDQYLHMLEEAEKRDHRKLGKQLDLFHMQEESPGMVFWHPKGWALWQQVEQYMRRRVNDAGYLEIKTPMIMDRSLWEASGHWQNYRENMFTTESEKRDYAIKPMNCPGHVQVFKHGLRSYRDLPLRYAEFGSCHRNEASGALHGLMRVRGFVQDDAHIFCTEEQFIAESIAFNTLAMSVYKDFGFEHIDIKLSLRPEQRAGTDETWDRAEQGLRDALTACGLSWEELPGEGAFYGPKIEYHIKDALGRSWQCGTLQLDMVLPERLGAEYVAEDNSRRRPVMLHRAIVGSMERFLGILIEHHAGAMPAWLAPFQAVVLNIAESQVEYAHSLTQTLQKQGVRVAGDLRNEKISYKIREHTLEKVPYLLVVGDKERDAQTVAVRARGGVDLGVMPIEAFVERLQEDLRSFK.

The TGS domain maps to 1–61; that stretch reads MVSIRLPDGS…DRDAALAIIT (61 aa). A catalytic region spans residues 242-533; it reads DHRKLGKQLD…LIEHHAGAMP (292 aa). Zn(2+) is bound by residues Cys333, His384, and His510.

It belongs to the class-II aminoacyl-tRNA synthetase family. In terms of assembly, homodimer. Requires Zn(2+) as cofactor.

It is found in the cytoplasm. The enzyme catalyses tRNA(Thr) + L-threonine + ATP = L-threonyl-tRNA(Thr) + AMP + diphosphate + H(+). In terms of biological role, catalyzes the attachment of threonine to tRNA(Thr) in a two-step reaction: L-threonine is first activated by ATP to form Thr-AMP and then transferred to the acceptor end of tRNA(Thr). Also edits incorrectly charged L-seryl-tRNA(Thr). This chain is Threonine--tRNA ligase, found in Burkholderia ambifaria (strain ATCC BAA-244 / DSM 16087 / CCUG 44356 / LMG 19182 / AMMD) (Burkholderia cepacia (strain AMMD)).